We begin with the raw amino-acid sequence, 420 residues long: Nucleobindin-2 (420 aa).

An N-terminal signal peptide occupies residues M1 to A24. The DNA-binding element occupies R171–P223. Residues T194–S225 are disordered. The binds to necdin stretch occupies residues K213–T420. EF-hand domains lie at P241–K276 and E293–L328. The Ca(2+) site is built by D254, N256, D258, E265, D306, N308, D310, and E317. Residues E304 to E334 carry the GBA motif. S332 is subject to Phosphoserine. Positions D366–K386 are enriched in basic and acidic residues. The tract at residues D366–T420 is disordered. Low complexity predominate over residues Q387–L396.

This sequence belongs to the nucleobindin family. In terms of assembly, interacts (via GBA motif) with guanine nucleotide-binding protein G(i) alpha subunit GNAI3. Preferentially interacts with inactive rather than active GNAI3. Interaction with GNAI3 is inhibited when NUCB2 binds calcium, probably due to a conformational change which renders the GBA motif inaccessible. Binds to the postmitotic growth suppressor NDN; coexpression abolishes NUCB2 secretion. Interacts with MC4R.

It is found in the golgi apparatus. It localises to the endoplasmic reticulum. The protein localises to the nucleus envelope. Its subcellular location is the membrane. The protein resides in the cytoplasm. It is found in the secreted. Calcium-binding protein which may have a role in calcium homeostasis. Acts as a non-receptor guanine nucleotide exchange factor which binds to and activates guanine nucleotide-binding protein (G-protein) alpha subunit GNAI3. Its function is as follows. Anorexigenic peptide, seems to play an important role in hypothalamic pathways regulating food intake and energy homeostasis, acting in a leptin-independent manner. May also exert hypertensive roles and modulate blood pressure through directly acting on peripheral arterial resistance. In intestinal epithelial cells, plays a role in the inhibition of hepatic glucose production via MC4R receptor leading to increased cyclic adenosine monophosphate (cAMP) levels and glucagon-like peptide 1 (GLP-1) secretion. This chain is Nucleobindin-2 (Nucb2), found in Rattus norvegicus (Rat).